The chain runs to 252 residues: Geranylgeranylglyceryl phosphate synthase (252 aa).

D22 and S51 together coordinate Mg(2+). Residues 170 to 176, 201 to 202, and 223 to 224 contribute to the sn-glycerol 1-phosphate site; these read YFEAGSG, GG, and GS.

It belongs to the GGGP/HepGP synthase family. Group II subfamily. Requires Mg(2+) as cofactor.

It is found in the cytoplasm. It catalyses the reaction sn-glycerol 1-phosphate + (2E,6E,10E)-geranylgeranyl diphosphate = sn-3-O-(geranylgeranyl)glycerol 1-phosphate + diphosphate. It functions in the pathway membrane lipid metabolism; glycerophospholipid metabolism. Functionally, prenyltransferase that catalyzes the transfer of the geranylgeranyl moiety of geranylgeranyl diphosphate (GGPP) to the C3 hydroxyl of sn-glycerol-1-phosphate (G1P). This reaction is the first ether-bond-formation step in the biosynthesis of archaeal membrane lipids. This Thermoplasma volcanium (strain ATCC 51530 / DSM 4299 / JCM 9571 / NBRC 15438 / GSS1) protein is Geranylgeranylglyceryl phosphate synthase.